We begin with the raw amino-acid sequence, 485 residues long: Transcription factor E2FA (485 aa).

Positions 1–11 (MSGVVRSSPGS) are enriched in low complexity. Disordered stretches follow at residues 1–69 (MSGV…SNNN) and 114–159 (SGFT…SPIT). Positions 12-26 (SQPPPPPPHHPPSSP) are enriched in pro residues. Positions 114 to 125 (SGFTNIPSSPCQ) are enriched in polar residues. The segment covering 129–141 (KGGRVNIKSKAKG) has biased composition (basic residues). The span at 142–159 (NKSTPQTPISTNAGSPIT) shows a compositional bias: polar residues. The DNA-binding element occupies 167-232 (RYDSSLGLLT…PFKNRILWKG (66 aa)). Positions 245 to 286 (SVLQLQAEIENLALEEQALDNQIRQTEERLRDLSENEKNQKW) form a coiled coil. The segment at 249 to 277 (LQAEIENLALEEQALDNQIRQTEERLRDL) is leucine-zipper. The interval 435 to 450 (DYWLLSNAEISMTDIW) is retinoblastoma protein binding.

It belongs to the E2F/DP family. Heterodimer with DP proteins. Interacts (via dimerization domain) preferentially with DPA, but also with DPB. Interacts with maize retinoblastoma-related protein RBR1. No interaction with E2FD. Highly expressed in the shoot apical meristem, emerging leaf primordia, and vascular tissues of young leaf primordia. Expressed in flowers, in epidermis and cortex of hypocotyls, and at lower levels in leaves.

The protein resides in the cytoplasm. The protein localises to the nucleus. In terms of biological role, transcription activator that binds DNA cooperatively with DP proteins through the E2 recognition site, 5'-TTTC[CG]CGC-3' found in the promoter region of a number of genes whose products are involved in cell cycle regulation or in DNA replication. The binding of retinoblastoma-related proteins represses transactivation. Regulates gene expression both positively and negatively. Activates the expression of E2FB. Involved in the control of cell-cycle progression from G1 to S phase. Stimulates cell proliferation and delays differentiation. The sequence is that of Transcription factor E2FA (E2FA) from Arabidopsis thaliana (Mouse-ear cress).